The sequence spans 441 residues: tRNA(Ile)-lysidine synthase (441 aa).

ATP is bound at residue 27–32; it reads SGGVDS.

Belongs to the tRNA(Ile)-lysidine synthase family.

It is found in the cytoplasm. The enzyme catalyses cytidine(34) in tRNA(Ile2) + L-lysine + ATP = lysidine(34) in tRNA(Ile2) + AMP + diphosphate + H(+). Functionally, ligates lysine onto the cytidine present at position 34 of the AUA codon-specific tRNA(Ile) that contains the anticodon CAU, in an ATP-dependent manner. Cytidine is converted to lysidine, thus changing the amino acid specificity of the tRNA from methionine to isoleucine. The sequence is that of tRNA(Ile)-lysidine synthase from Proteus mirabilis (strain HI4320).